Consider the following 47-residue polypeptide: Mu-theraphotoxin-An1a (47 aa).

3 cysteine pairs are disulfide-bonded: Cys4/Cys34, Cys8/Cys39, and Cys22/Cys44.

Contains 3 disulfide bonds. As to expression, expressed by the venom gland.

The protein resides in the secreted. Functionally, is toxic to insects. Reduces amplitude and frequency of spontaneous firing and inhibits voltage-gated sodium current (Nav) in the dorsal unpaired median (DUM) neurons of P.americana. The protein is Mu-theraphotoxin-An1a of Acanthoscurria natalensis (Tarantula spider).